The following is a 291-amino-acid chain: Shikimate dehydrogenase (NADP(+)) (291 aa).

Residues 22–24 and Thr69 each bind shikimate; that span reads SLS. Lys73 serves as the catalytic Proton acceptor. Asn94 and Asp110 together coordinate shikimate. Residues 131-135 and Leu226 contribute to the NADP(+) site; that span reads GSGGA. Tyr228 contributes to the shikimate binding site. Gly249 contributes to the NADP(+) binding site.

The protein belongs to the shikimate dehydrogenase family. In terms of assembly, homodimer.

It carries out the reaction shikimate + NADP(+) = 3-dehydroshikimate + NADPH + H(+). Its pathway is metabolic intermediate biosynthesis; chorismate biosynthesis; chorismate from D-erythrose 4-phosphate and phosphoenolpyruvate: step 4/7. Involved in the biosynthesis of the chorismate, which leads to the biosynthesis of aromatic amino acids. Catalyzes the reversible NADPH linked reduction of 3-dehydroshikimate (DHSA) to yield shikimate (SA). This is Shikimate dehydrogenase (NADP(+)) from Synechococcus sp. (strain JA-3-3Ab) (Cyanobacteria bacterium Yellowstone A-Prime).